Consider the following 308-residue polypeptide: Aspartate carbamoyltransferase catalytic subunit (308 aa).

Residues Arg59 and Thr60 each contribute to the carbamoyl phosphate site. Lys87 contributes to the L-aspartate binding site. Arg109, His137, and Gln140 together coordinate carbamoyl phosphate. Arg170 and Arg224 together coordinate L-aspartate. The carbamoyl phosphate site is built by Gly265 and Pro266.

This sequence belongs to the aspartate/ornithine carbamoyltransferase superfamily. ATCase family. In terms of assembly, heterododecamer (2C3:3R2) of six catalytic PyrB chains organized as two trimers (C3), and six regulatory PyrI chains organized as three dimers (R2).

It carries out the reaction carbamoyl phosphate + L-aspartate = N-carbamoyl-L-aspartate + phosphate + H(+). The protein operates within pyrimidine metabolism; UMP biosynthesis via de novo pathway; (S)-dihydroorotate from bicarbonate: step 2/3. Catalyzes the condensation of carbamoyl phosphate and aspartate to form carbamoyl aspartate and inorganic phosphate, the committed step in the de novo pyrimidine nucleotide biosynthesis pathway. In Flavobacterium johnsoniae (strain ATCC 17061 / DSM 2064 / JCM 8514 / BCRC 14874 / CCUG 350202 / NBRC 14942 / NCIMB 11054 / UW101) (Cytophaga johnsonae), this protein is Aspartate carbamoyltransferase catalytic subunit.